Consider the following 112-residue polypeptide: Large ribosomal subunit protein mL53 (112 aa).

Belongs to the mitochondrion-specific ribosomal protein mL53 family. In terms of assembly, component of the mitochondrial ribosome large subunit (39S) which comprises a 16S rRNA and about 50 distinct proteins.

Its subcellular location is the mitochondrion. The sequence is that of Large ribosomal subunit protein mL53 (MRPL53) from Pongo abelii (Sumatran orangutan).